Consider the following 611-residue polypeptide: Creatine transporter (611 aa).

A helical membrane pass occupies residues 45–65; it reads FIMSCVGFAVGLGNVWRFPYL. Residues 66–71 are Extracellular-facing; sequence CYKNGG. The helical transmembrane segment at 72 to 92 threads the bilayer; it reads GVFLIPYLLVAVFGGIPIFFL. Over 93-122 the chain is Cytoplasmic; sequence EISLGQFMKAGGINAWNIAPLFKGLGYASM. The chain crosses the membrane as a helical span at residues 123–143; that stretch reads VIVFFCNTYYILVLTWSSFYL. Residues 144 to 207 lie on the Extracellular side of the membrane; the sequence is VQSFSSPLPW…LSSGLGDVGE (64 aa). Asn157 and Asn171 each carry an N-linked (GlcNAc...) asparagine glycan. A helical transmembrane segment spans residues 208-228; the sequence is IGWELTLCLTATWMLVYFCIW. The Cytoplasmic segment spans residues 229-246; it reads KGVKTSGKVVYVTATFPY. A helical transmembrane segment spans residues 247–267; it reads IILVILLVRGVTLHGAVQGIV. At 268 to 281 the chain is on the extracellular side; the sequence is YYLQPDWGKLGEAQ. Residues 282–302 traverse the membrane as a helical segment; that stretch reads VWIDAGTQIFFSYAIGLGTLT. The Cytoplasmic segment spans residues 303-318; sequence ALGSYNQLHNDCYKDA. A helical transmembrane segment spans residues 319–339; that stretch reads FILSLVNSATSFFAGLVVFSI. Residues 340–371 lie on the Extracellular side of the membrane; it reads LGFMAVEEGVDISVVAESGPGLAFIAYPKAVT. Residues 372–392 form a helical membrane-spanning segment; the sequence is LMPFPQVWAVLFFIMLLCLGL. Topologically, residues 393–421 are cytoplasmic; sequence GSQFVGVEGFVTAILDLWPSKFSFRYLRE. The helical transmembrane segment at 422–442 threads the bilayer; that stretch reads VVVAMVICLSFLIDLSMITEG. At 443-456 the chain is on the extracellular side; that stretch reads GMYIFQIFDYYSAS. Residues 457 to 477 traverse the membrane as a helical segment; the sequence is GTTLLWTAFWECVAVAWVYGG. The Cytoplasmic segment spans residues 478-497; the sequence is DRYLDDLAWMLGYRPWALVK. The chain crosses the membrane as a helical span at residues 498–518; sequence WCWSVITPLVCMGIFTFHLVN. Residues 519–537 lie on the Extracellular side of the membrane; the sequence is YKPLTYNKTYTYPWWGEAI. N-linked (GlcNAc...) asparagine glycosylation occurs at Asn525. Residues 538–558 traverse the membrane as a helical segment; that stretch reads GWCLALASMLCVPTTVLYSLS. Topologically, residues 559–611 are cytoplasmic; that stretch reads RGRGSLKERWRKLTTPVWASHHLAYKMAGAKINQPCEGVVSCEEKVVIFESVL.

It belongs to the sodium:neurotransmitter symporter (SNF) (TC 2.A.22) family.

It is found in the membrane. In terms of biological role, required for the uptake of creatine. The sequence is that of Creatine transporter from Torpedo marmorata (Marbled electric ray).